The chain runs to 499 residues: Glycerol kinase (499 aa).

ADP is bound at residue threonine 13. The ATP site is built by threonine 13, threonine 14, and serine 15. Residue threonine 13 participates in sn-glycerol 3-phosphate binding. Arginine 17 provides a ligand contact to ADP. The sn-glycerol 3-phosphate site is built by arginine 83, glutamate 84, tyrosine 135, and aspartate 244. Arginine 83, glutamate 84, tyrosine 135, aspartate 244, and glutamine 245 together coordinate glycerol. ADP is bound by residues threonine 266 and glycine 309. Positions 266, 309, 313, and 410 each coordinate ATP. Positions 410 and 414 each coordinate ADP.

This sequence belongs to the FGGY kinase family.

It catalyses the reaction glycerol + ATP = sn-glycerol 3-phosphate + ADP + H(+). It participates in polyol metabolism; glycerol degradation via glycerol kinase pathway; sn-glycerol 3-phosphate from glycerol: step 1/1. Inhibited by fructose 1,6-bisphosphate (FBP). Functionally, key enzyme in the regulation of glycerol uptake and metabolism. Catalyzes the phosphorylation of glycerol to yield sn-glycerol 3-phosphate. The chain is Glycerol kinase from Paraburkholderia phytofirmans (strain DSM 17436 / LMG 22146 / PsJN) (Burkholderia phytofirmans).